The following is a 294-amino-acid chain: 4-hydroxy-tetrahydrodipicolinate synthase (294 aa).

Threonine 47 contacts pyruvate. Tyrosine 135 functions as the Proton donor/acceptor in the catalytic mechanism. The active-site Schiff-base intermediate with substrate is lysine 163. Threonine 205 contributes to the pyruvate binding site.

This sequence belongs to the DapA family. As to quaternary structure, homotetramer; dimer of dimers.

Its subcellular location is the cytoplasm. It carries out the reaction L-aspartate 4-semialdehyde + pyruvate = (2S,4S)-4-hydroxy-2,3,4,5-tetrahydrodipicolinate + H2O + H(+). It participates in amino-acid biosynthesis; L-lysine biosynthesis via DAP pathway; (S)-tetrahydrodipicolinate from L-aspartate: step 3/4. In terms of biological role, catalyzes the condensation of (S)-aspartate-beta-semialdehyde [(S)-ASA] and pyruvate to 4-hydroxy-tetrahydrodipicolinate (HTPA). The protein is 4-hydroxy-tetrahydrodipicolinate synthase of Rickettsia conorii (strain ATCC VR-613 / Malish 7).